The primary structure comprises 290 residues: TP53-target gene 5 protein (290 aa).

Over residues 1 to 13 (MSPSAKKRPKNSR) the composition is skewed to basic residues. Disordered regions lie at residues 1–29 (MSPSAKKRPKNSRVSKMQDEKLRDETEQP) and 114–178 (KLES…RQPL). Basic and acidic residues-rich tracts occupy residues 16-26 (KMQDEKLRDET), 114-130 (KLESTGDPKKKEYKEWK), and 138-167 (RNKEKTSLAAMPRKEKHIEPEVPRTSRDDS).

In terms of assembly, interacts with p53/TP53. In terms of tissue distribution, highly expressed in heart, brain and small intestine. Less abundant in skeletal muscle, spleen, prostate, ovary and colon. A smaller transcript is expressed specifically in the testis.

Its subcellular location is the cytoplasm. The protein resides in the nucleus. In terms of biological role, may play a significant role in p53/TP53-mediating signaling pathway. The chain is TP53-target gene 5 protein (TP53TG5) from Homo sapiens (Human).